A 265-amino-acid polypeptide reads, in one-letter code: Small ribosomal subunit protein uS5 (265 aa).

The segment covering 1 to 15 (MADTQPAQEAPAADA) has biased composition (low complexity). Residues 1–44 (MADTQPAQEAPAADAPRAERNFGRGRGGRGGRGRGRGGPGEEKE) are disordered. The span at 26–35 (RGGRGGRGRG) shows a compositional bias: basic residues. The S5 DRBM domain maps to 88-151 (LHDEMMKIYP…IAAKLNIVPV (64 aa)). The segment at 245–265 (TEPSRDPTDEHGELLAEMTTA) is disordered. The segment covering 246 to 258 (EPSRDPTDEHGEL) has biased composition (basic and acidic residues).

It belongs to the universal ribosomal protein uS5 family.

In terms of biological role, component of the ribosome, a large ribonucleoprotein complex responsible for the synthesis of proteins in the cell. The small ribosomal subunit (SSU) binds messenger RNAs (mRNAs) and translates the encoded message by selecting cognate aminoacyl-transfer RNA (tRNA) molecules. The large subunit (LSU) contains the ribosomal catalytic site termed the peptidyl transferase center (PTC), which catalyzes the formation of peptide bonds, thereby polymerizing the amino acids delivered by tRNAs into a polypeptide chain. The nascent polypeptides leave the ribosome through a tunnel in the LSU and interact with protein factors that function in enzymatic processing, targeting, and the membrane insertion of nascent chains at the exit of the ribosomal tunnel. Plays a role in the assembly and function of the 40S ribosomal subunit. Mutations in this protein affects the control of translational fidelity. Involved in nucleolar processing of pre-18S ribosomal RNA and ribosome assembly. This chain is Small ribosomal subunit protein uS5, found in Leishmania amazonensis.